The sequence spans 211 residues: Protein G12 (211 aa).

An N-terminal signal peptide occupies residues 1–19 (MKIAAFVVACLVATSAVSC).

This Anopheles gambiae (African malaria mosquito) protein is Protein G12.